Reading from the N-terminus, the 67-residue chain is Large ribosomal subunit protein uL29 (67 aa).

It belongs to the universal ribosomal protein uL29 family.

This chain is Large ribosomal subunit protein uL29, found in Solibacter usitatus (strain Ellin6076).